The chain runs to 187 residues: Ribosome hibernation promotion factor (187 aa).

Belongs to the HPF/YfiA ribosome-associated protein family. Long HPF subfamily. In terms of assembly, interacts with 100S ribosomes.

It is found in the cytoplasm. Involved in 100S ribosome formation from 70S ribosomes; 100S ribosomes are probably translationally inactive. Ribosome hibernation may be used by the cell to decrease overall energy consumption under nutrient-limiting conditions. Unlike E.coli, 100S ribosomes are present from mid-exponential growth, peak during the transition from log to stationary phase and then decrease. This is Ribosome hibernation promotion factor from Listeria monocytogenes serotype 1/2a (strain 10403S).